The chain runs to 134 residues: Arsenate reductase 2 (134 aa).

Residues C11, C83, and C90 each act as nucleophile in the active site. 2 disulfides stabilise this stretch: C11–C83 and C83–C90.

The protein belongs to the low molecular weight phosphotyrosine protein phosphatase family. Thioredoxin-coupled ArsC subfamily.

The protein localises to the cytoplasm. It catalyses the reaction arsenate + [thioredoxin]-dithiol + H(+) = arsenite + [thioredoxin]-disulfide + H2O. Its function is as follows. Catalyzes the reduction of arsenate [As(V)] to arsenite [As(III)]. The protein is Arsenate reductase 2 of Bacillus cereus (strain ATCC 10987 / NRS 248).